The following is a 203-amino-acid chain: Histidine biosynthesis bifunctional protein HisIE (203 aa).

A phosphoribosyl-AMP cyclohydrolase region spans residues 1–108 (MELDFDKMNG…GEKNEEPVMF (108 aa)). The segment at 109–203 (LKALQDFIDK…ERHSSTWKKH (95 aa)) is phosphoribosyl-ATP pyrophosphohydrolase.

The protein in the N-terminal section; belongs to the PRA-CH family. It in the C-terminal section; belongs to the PRA-PH family.

Its subcellular location is the cytoplasm. The enzyme catalyses 1-(5-phospho-beta-D-ribosyl)-ATP + H2O = 1-(5-phospho-beta-D-ribosyl)-5'-AMP + diphosphate + H(+). It catalyses the reaction 1-(5-phospho-beta-D-ribosyl)-5'-AMP + H2O = 1-(5-phospho-beta-D-ribosyl)-5-[(5-phospho-beta-D-ribosylamino)methylideneamino]imidazole-4-carboxamide. It participates in amino-acid biosynthesis; L-histidine biosynthesis; L-histidine from 5-phospho-alpha-D-ribose 1-diphosphate: step 2/9. Its pathway is amino-acid biosynthesis; L-histidine biosynthesis; L-histidine from 5-phospho-alpha-D-ribose 1-diphosphate: step 3/9. The chain is Histidine biosynthesis bifunctional protein HisIE from Bacteroides thetaiotaomicron (strain ATCC 29148 / DSM 2079 / JCM 5827 / CCUG 10774 / NCTC 10582 / VPI-5482 / E50).